The primary structure comprises 196 residues: 3-isopropylmalate dehydratase small subunit (196 aa).

The protein belongs to the LeuD family. LeuD type 1 subfamily. Heterodimer of LeuC and LeuD.

It carries out the reaction (2R,3S)-3-isopropylmalate = (2S)-2-isopropylmalate. It participates in amino-acid biosynthesis; L-leucine biosynthesis; L-leucine from 3-methyl-2-oxobutanoate: step 2/4. Functionally, catalyzes the isomerization between 2-isopropylmalate and 3-isopropylmalate, via the formation of 2-isopropylmaleate. The polypeptide is 3-isopropylmalate dehydratase small subunit (Herpetosiphon aurantiacus (strain ATCC 23779 / DSM 785 / 114-95)).